Consider the following 185-residue polypeptide: Protein GrpE (185 aa).

The span at 1–12 shows a compositional bias: basic and acidic residues; that stretch reads MADEQLNEKDLN. The interval 1–22 is disordered; the sequence is MADEQLNEKDLNVEETGAGNAA.

This sequence belongs to the GrpE family. As to quaternary structure, homodimer.

The protein localises to the cytoplasm. Its function is as follows. Participates actively in the response to hyperosmotic and heat shock by preventing the aggregation of stress-denatured proteins, in association with DnaK and GrpE. It is the nucleotide exchange factor for DnaK and may function as a thermosensor. Unfolded proteins bind initially to DnaJ; upon interaction with the DnaJ-bound protein, DnaK hydrolyzes its bound ATP, resulting in the formation of a stable complex. GrpE releases ADP from DnaK; ATP binding to DnaK triggers the release of the substrate protein, thus completing the reaction cycle. Several rounds of ATP-dependent interactions between DnaJ, DnaK and GrpE are required for fully efficient folding. The protein is Protein GrpE of Pseudomonas putida (strain ATCC 700007 / DSM 6899 / JCM 31910 / BCRC 17059 / LMG 24140 / F1).